Reading from the N-terminus, the 275-residue chain is Lectin DB58 (275 aa).

Positions 1 to 22 (MASSTVSVVLSLFLLLLTQAYS) are cleaved as a signal peptide. N-linked (GlcNAc...) asparagine glycans are attached at residues Asn-34 and Asn-101.

The protein belongs to the leguminous lectin family. In terms of assembly, heterodimer, composed of an alpha and a beta subunit derived from a single precursor. Leu-264 is missing in a major portion of the beta subunit, suggesting an origin by sequential removal of amino acids rather than a processing by endoproteolytic cleavage.

Metalloglycoprotein, containing Ca, Mg, Mn, and Zn and the carbohydrates galactose, glucosamine, mannose, and fucose. It agglutinates erythrocytes of blood group A1. The protein is Lectin DB58 of Vigna unguiculata subsp. cylindrica (Horse gram).